A 310-amino-acid polypeptide reads, in one-letter code: Elongation factor Ts (310 aa).

The involved in Mg(2+) ion dislocation from EF-Tu stretch occupies residues 80–83 (TDFV).

Belongs to the EF-Ts family.

The protein localises to the cytoplasm. Its function is as follows. Associates with the EF-Tu.GDP complex and induces the exchange of GDP to GTP. It remains bound to the aminoacyl-tRNA.EF-Tu.GTP complex up to the GTP hydrolysis stage on the ribosome. This Methylocella silvestris (strain DSM 15510 / CIP 108128 / LMG 27833 / NCIMB 13906 / BL2) protein is Elongation factor Ts.